Consider the following 386-residue polypeptide: Succinate--CoA ligase [ADP-forming] subunit beta (386 aa).

One can recognise an ATP-grasp domain in the interval 9 to 244; it reads KAVLRSYGVS…LEEEDSKEIE (236 aa). ATP contacts are provided by residues lysine 46, 53–55, glutamate 99, cysteine 102, and glutamate 107; that span reads GRG. Residues asparagine 199 and aspartate 213 each coordinate Mg(2+). Residues asparagine 264 and 321-323 each bind substrate; that span reads GIM.

This sequence belongs to the succinate/malate CoA ligase beta subunit family. In terms of assembly, heterotetramer of two alpha and two beta subunits. Requires Mg(2+) as cofactor.

It catalyses the reaction succinate + ATP + CoA = succinyl-CoA + ADP + phosphate. It carries out the reaction GTP + succinate + CoA = succinyl-CoA + GDP + phosphate. It functions in the pathway carbohydrate metabolism; tricarboxylic acid cycle; succinate from succinyl-CoA (ligase route): step 1/1. In terms of biological role, succinyl-CoA synthetase functions in the citric acid cycle (TCA), coupling the hydrolysis of succinyl-CoA to the synthesis of either ATP or GTP and thus represents the only step of substrate-level phosphorylation in the TCA. The beta subunit provides nucleotide specificity of the enzyme and binds the substrate succinate, while the binding sites for coenzyme A and phosphate are found in the alpha subunit. This is Succinate--CoA ligase [ADP-forming] subunit beta from Bacillus mycoides (strain KBAB4) (Bacillus weihenstephanensis).